The following is a 550-amino-acid chain: Zinc finger protein squeeze (550 aa).

Low complexity predominate over residues 73–105 (QQQQQQQQQEMLQQQQQHQAHQEQQQQQQQQQQ). Residues 73–179 (QQQQQQQQQE…GGGGGDGDQS (107 aa)) are disordered. Over residues 106 to 117 (QHHHQQQQHHLK) the composition is skewed to basic residues. Polar residues predominate over residues 141–156 (RSPQRPLMSSGSNASS). The span at 164–176 (SGGGPGGGGGGDG) shows a compositional bias: gly residues. C2H2-type zinc fingers lie at residues 182 to 204 (YKCA…TRIH), 210 to 232 (YRCE…IRTH), 238 to 262 (YKCR…SRCH), 268 to 290 (FKCN…IPKH), and 299 to 321 (HICN…LQKH). The segment at 399–485 (LQQHQQQQQQ…VPPSHLQQHR (87 aa)) is disordered. Residues 400–416 (QQHQQQQQQQQQDMLQQ) show a composition bias toward low complexity. Thr424 carries the phosphothreonine modification. Phosphoserine is present on residues Ser428 and Ser430. Residues 444 to 460 (QTTPQHHLQQQQQQQQP) show a composition bias toward low complexity. Phosphotyrosine occurs at positions 494 and 496.

It belongs to the krueppel C2H2-type zinc-finger protein family. In terms of assembly, interacts with nab; which acts as a coactivator. Interacts with ap.

It is found in the nucleus. Functionally, transcription factor involved in neuronal fate specification. First required in embryonic CNS development to define the number of cells that express apterous (ap) in the ap thoracic cluster of interneurons. Later on, it plays a central role in the combinatorial code of transcription factors that specifies the fate of the Tv neuron in the ap cluster by participating in the transcription regulation of FMRFa in Tv cells. Also required for projection neuron dendritic targeting. This is Zinc finger protein squeeze (sqz) from Drosophila pseudoobscura pseudoobscura (Fruit fly).